The sequence spans 277 residues: uncharacterized protein (277 aa).

The disordered stretch occupies residues 256–277; that stretch reads HTTTTTTSPSFTIPSNSSKGVS.

In terms of biological role, this protein may be involved in virus assembly. Essential for virus function. This is an uncharacterized protein from Saccharolobus solfataricus (Sulfolobus solfataricus).